Here is a 416-residue protein sequence, read N- to C-terminus: Gamma-glutamyl phosphate reductase (416 aa).

This sequence belongs to the gamma-glutamyl phosphate reductase family.

The protein resides in the cytoplasm. The enzyme catalyses L-glutamate 5-semialdehyde + phosphate + NADP(+) = L-glutamyl 5-phosphate + NADPH + H(+). It functions in the pathway amino-acid biosynthesis; L-proline biosynthesis; L-glutamate 5-semialdehyde from L-glutamate: step 2/2. Its function is as follows. Catalyzes the NADPH-dependent reduction of L-glutamate 5-phosphate into L-glutamate 5-semialdehyde and phosphate. The product spontaneously undergoes cyclization to form 1-pyrroline-5-carboxylate. This Salmonella typhi protein is Gamma-glutamyl phosphate reductase.